The primary structure comprises 312 residues: Methionyl-tRNA formyltransferase (312 aa).

(6S)-5,6,7,8-tetrahydrofolate is bound at residue 109-112 (SLLP).

The protein belongs to the Fmt family.

It catalyses the reaction L-methionyl-tRNA(fMet) + (6R)-10-formyltetrahydrofolate = N-formyl-L-methionyl-tRNA(fMet) + (6S)-5,6,7,8-tetrahydrofolate + H(+). Its function is as follows. Attaches a formyl group to the free amino group of methionyl-tRNA(fMet). The formyl group appears to play a dual role in the initiator identity of N-formylmethionyl-tRNA by promoting its recognition by IF2 and preventing the misappropriation of this tRNA by the elongation apparatus. This Nitrosospira multiformis (strain ATCC 25196 / NCIMB 11849 / C 71) protein is Methionyl-tRNA formyltransferase.